Reading from the N-terminus, the 181-residue chain is Protein GrpE (181 aa).

The span at 1–12 shows a compositional bias: polar residues; it reads MENTQENPTTPS. The disordered stretch occupies residues 1 to 33; that stretch reads MENTQENPTTPSAEDIGSEKQAAQGAAPAAEAA. Low complexity predominate over residues 21 to 33; the sequence is QAAQGAAPAAEAA.

It belongs to the GrpE family. In terms of assembly, homodimer.

The protein localises to the cytoplasm. Participates actively in the response to hyperosmotic and heat shock by preventing the aggregation of stress-denatured proteins, in association with DnaK and GrpE. It is the nucleotide exchange factor for DnaK and may function as a thermosensor. Unfolded proteins bind initially to DnaJ; upon interaction with the DnaJ-bound protein, DnaK hydrolyzes its bound ATP, resulting in the formation of a stable complex. GrpE releases ADP from DnaK; ATP binding to DnaK triggers the release of the substrate protein, thus completing the reaction cycle. Several rounds of ATP-dependent interactions between DnaJ, DnaK and GrpE are required for fully efficient folding. The polypeptide is Protein GrpE (Burkholderia cenocepacia (strain HI2424)).